The chain runs to 689 residues: Polyribonucleotide nucleotidyltransferase (689 aa).

Mg(2+)-binding residues include aspartate 482 and aspartate 488. Residues proline 549–valine 608 enclose the KH domain. An S1 motif domain is found at glycine 618–lysine 686.

The protein belongs to the polyribonucleotide nucleotidyltransferase family. Requires Mg(2+) as cofactor.

It is found in the cytoplasm. The enzyme catalyses RNA(n+1) + phosphate = RNA(n) + a ribonucleoside 5'-diphosphate. In terms of biological role, involved in mRNA degradation. Catalyzes the phosphorolysis of single-stranded polyribonucleotides processively in the 3'- to 5'-direction. The protein is Polyribonucleotide nucleotidyltransferase of Endomicrobium trichonymphae.